Reading from the N-terminus, the 229-residue chain is Potassium/proton antiporter CemA (229 aa).

3 consecutive transmembrane segments (helical) span residues 7-27 (FTPLLYLASLVFLPWWISLSF), 114-134 (IICFVILSGYSIWGNEELVIL), and 189-209 (ILSGLVSTFPVILDTLFKFWI).

This sequence belongs to the CemA family.

The protein resides in the plastid. Its subcellular location is the chloroplast inner membrane. It catalyses the reaction K(+)(in) + H(+)(out) = K(+)(out) + H(+)(in). Its function is as follows. Contributes to K(+)/H(+) antiport activity by supporting proton efflux to control proton extrusion and homeostasis in chloroplasts in a light-dependent manner to modulate photosynthesis. Prevents excessive induction of non-photochemical quenching (NPQ) under continuous-light conditions. Indirectly promotes efficient inorganic carbon uptake into chloroplasts. In Panax ginseng (Korean ginseng), this protein is Potassium/proton antiporter CemA.